Consider the following 507-residue polypeptide: Pre-glycoprotein polyprotein GP complex (507 aa).

The N-myristoyl glycine; by host moiety is linked to residue G2. Residues 2 to 17 (GQVVTFLQSLPEVINE) are Extracellular-facing. Residues 18–33 (AINIALIAISIICILK) traverse the membrane as a helical segment. Topologically, residues 34-58 (GLVNFWKCGVVQLAIFLCLAGRKCD) are cytoplasmic. Residue C57 coordinates Zn(2+). Over 59 to 445 (GLMIDRRHEL…QGKTPIALTD (387 aa)) the chain is Extracellular. Intrachain disulfides connect C86–C247, C292–C305, C314–C323, and C377–C398. 4 N-linked (GlcNAc...) asparagine; by host glycosylation sites follow: N89, N111, N179, and N240. N-linked (GlcNAc...) asparagine; by host glycosylation is found at N378, N386, N403, and N408. The chain crosses the membrane as a helical span at residues 446 to 466 (ICFWSLVFFTSTVFLQLVGIP). Over 467 to 507 (THRHLVGEGCPKPHRITSNSLCACGYYKIPKRPTRWVRKGK) the chain is Cytoplasmic. The Zn(2+) site is built by H468, H470, C476, H480, C488, and C490.

This sequence belongs to the arenaviridae GPC protein family. In terms of assembly, interacts with glycoprotein G2. Part of the GP complex (GP-C) together with glycoprotein G1 and glycoprotein G2. The GP-complex interacts with protein Z, which interacts with ribonucleocapsid; these interactions may induce virion budding. Homotrimer; disulfide-linked. In pre-fusion state, G1 homotrimers bind G2 homotrimers via ionic interactions. Part of the GP complex (GP-C) together with glycoprotein G2 and the stable signal peptide. The GP-complex interacts with protein Z, which interacts with ribonucleocapsid; these interactions may induce virion budding. As to quaternary structure, homotrimer. Interacts with the stable signal peptide. In pre-fusion state, G2 homotrimers bind G1 homotrimers via ionic interactions. Part of the GP complex (GP-C) together with glycoprotein G1 and the stable signal peptide. Acidification in the endosome triggers rearrangements, which ultimately leads to a 6 helix bundle formed by the two heptad repeat domains (HR1 and HR2) in post-fusion state. The GP-complex interacts with protein Z, which interacts with ribonucleocapsid; these interactions may induce virion budding. In terms of processing, specific enzymatic cleavages in vivo yield mature proteins. GP-C polyprotein is cleaved in the endoplasmic reticulum by the host protease MBTPS1. Only cleaved glycoprotein is incorporated into virions. The SSP remains stably associated with the GP complex following cleavage by signal peptidase and plays crucial roles in the trafficking of GP through the secretory pathway. Post-translationally, myristoylation is necessary for GP2-mediated fusion activity.

The protein resides in the virion membrane. The protein localises to the host endoplasmic reticulum membrane. It is found in the host Golgi apparatus membrane. Its subcellular location is the host cell membrane. In terms of biological role, functions as a cleaved signal peptide that is retained as the third component of the GP complex (GP-C). Helps to stabilize the spike complex in its native conformation. The SSP is required for efficient glycoprotein expression, post-translational maturation cleavage of G1 and G2, glycoprotein transport to the cell surface plasma membrane, formation of infectious virus particles, and acid pH-dependent glycoprotein-mediated cell fusion. Forms the virion spikes together with glycoprotein G2. The glycoprotein spike trimers are connected to the underlying matrix. Interacts with the host receptor leading to virus endocytosis. Functionally, forms the virion spikes together with glycoprotein G1. The glycoprotein spike trimers are connected to the underlying matrix. Class I viral fusion protein that directs fusion of viral and host endosomal membranes, leading to delivery of the nucleocapsid into the cytoplasm. Membrane fusion is mediated by irreversible conformational changes induced by acidification. The chain is Pre-glycoprotein polyprotein GP complex from Allpahuayo mammarenavirus (isolate Rat/Peru/CLHP-2472/1997) (ALLV).